Here is a 486-residue protein sequence, read N- to C-terminus: Protein nucleotidyltransferase YdiU (486 aa).

ATP is bound by residues glycine 90, glycine 92, arginine 93, lysine 113, aspartate 125, glycine 126, arginine 176, and arginine 183. Residue aspartate 252 is the Proton acceptor of the active site. 2 residues coordinate Mg(2+): asparagine 253 and aspartate 262. Aspartate 262 is a binding site for ATP.

The protein belongs to the SELO family. Mg(2+) serves as cofactor. The cofactor is Mn(2+).

It catalyses the reaction L-seryl-[protein] + ATP = 3-O-(5'-adenylyl)-L-seryl-[protein] + diphosphate. The catalysed reaction is L-threonyl-[protein] + ATP = 3-O-(5'-adenylyl)-L-threonyl-[protein] + diphosphate. It carries out the reaction L-tyrosyl-[protein] + ATP = O-(5'-adenylyl)-L-tyrosyl-[protein] + diphosphate. The enzyme catalyses L-histidyl-[protein] + UTP = N(tele)-(5'-uridylyl)-L-histidyl-[protein] + diphosphate. It catalyses the reaction L-seryl-[protein] + UTP = O-(5'-uridylyl)-L-seryl-[protein] + diphosphate. The catalysed reaction is L-tyrosyl-[protein] + UTP = O-(5'-uridylyl)-L-tyrosyl-[protein] + diphosphate. Its function is as follows. Nucleotidyltransferase involved in the post-translational modification of proteins. It can catalyze the addition of adenosine monophosphate (AMP) or uridine monophosphate (UMP) to a protein, resulting in modifications known as AMPylation and UMPylation. The chain is Protein nucleotidyltransferase YdiU from Pseudomonas putida (strain W619).